The primary structure comprises 157 residues: SsrA-binding protein (157 aa).

Residues 133-157 (LHDKRETEKKRDWSREKSRLLRARG) are disordered. A compositionally biased stretch (basic and acidic residues) spans 135–151 (DKRETEKKRDWSREKSR).

Belongs to the SmpB family.

The protein localises to the cytoplasm. Required for rescue of stalled ribosomes mediated by trans-translation. Binds to transfer-messenger RNA (tmRNA), required for stable association of tmRNA with ribosomes. tmRNA and SmpB together mimic tRNA shape, replacing the anticodon stem-loop with SmpB. tmRNA is encoded by the ssrA gene; the 2 termini fold to resemble tRNA(Ala) and it encodes a 'tag peptide', a short internal open reading frame. During trans-translation Ala-aminoacylated tmRNA acts like a tRNA, entering the A-site of stalled ribosomes, displacing the stalled mRNA. The ribosome then switches to translate the ORF on the tmRNA; the nascent peptide is terminated with the 'tag peptide' encoded by the tmRNA and targeted for degradation. The ribosome is freed to recommence translation, which seems to be the essential function of trans-translation. This chain is SsrA-binding protein, found in Afipia carboxidovorans (strain ATCC 49405 / DSM 1227 / KCTC 32145 / OM5) (Oligotropha carboxidovorans).